We begin with the raw amino-acid sequence, 91 residues long: Na(+)/H(+) antiporter subunit F (91 aa).

The next 3 helical transmembrane spans lie at 5 to 27, 34 to 53, and 63 to 82; these read ILMI…TLIG, IVAL…VIMM, and VVLV…SKFI.

This sequence belongs to the CPA3 antiporters (TC 2.A.63) subunit F family. As to quaternary structure, forms a heterooligomeric complex that consists of seven subunits: MrpA, MrpB, MrpC, MrpD, MrpE, MrpF and MrpG.

The protein localises to the cell membrane. In terms of biological role, mnh complex is a Na(+)Li(+)/H(+) antiporter involved in Na(+) and/or Li(+) excretion and Na(+) resistance. Na(+)/H(+) antiport consumes a transmembrane electrical potential, and is thus inferred to be electrogenic. Does not transport K(+), Ca(2+) or Mg(2+). In Alkalihalophilus pseudofirmus (strain ATCC BAA-2126 / JCM 17055 / OF4) (Bacillus pseudofirmus), this protein is Na(+)/H(+) antiporter subunit F (mrpF).